Consider the following 268-residue polypeptide: MQQLNKTLIRQRFGRQLHGYNRHAFIQKKMAGHLADMVSASLASSEVGRLFEIGVGSAALTDALLHRLRIDRYYANDLVPQCRQMVETVTALHGVDSAEFLDGDIEALREIPGDLDVIVSGATVQWLEDLPGFFHRMAGALKPGGVLAFSTFGHDNMQEIRALESVGLHYHTLAEMQAMAGELYEVTGMEEERHQLDFTGPEAVLRHISRTGVNGLDGRAWTKSRHRAFIDRYRRAFSSGDGVRLTYHTMYCCFRKCPASAGVEATCC.

This sequence belongs to the methyltransferase superfamily.

It catalyses the reaction malonyl-[ACP] + S-adenosyl-L-methionine = malonyl-[ACP] methyl ester + S-adenosyl-L-homocysteine. It functions in the pathway cofactor biosynthesis; biotin biosynthesis. In terms of biological role, converts the free carboxyl group of a malonyl-thioester to its methyl ester by transfer of a methyl group from S-adenosyl-L-methionine (SAM). It allows to synthesize pimeloyl-ACP via the fatty acid synthetic pathway. The chain is Malonyl-[acyl-carrier protein] O-methyltransferase from Prosthecochloris aestuarii (strain DSM 271 / SK 413).